An 84-amino-acid chain; its full sequence is Exodeoxyribonuclease 7 small subunit (84 aa).

The protein belongs to the XseB family. In terms of assembly, heterooligomer composed of large and small subunits.

It localises to the cytoplasm. The enzyme catalyses Exonucleolytic cleavage in either 5'- to 3'- or 3'- to 5'-direction to yield nucleoside 5'-phosphates.. In terms of biological role, bidirectionally degrades single-stranded DNA into large acid-insoluble oligonucleotides, which are then degraded further into small acid-soluble oligonucleotides. The polypeptide is Exodeoxyribonuclease 7 small subunit (Bartonella bacilliformis (strain ATCC 35685 / KC583 / Herrer 020/F12,63)).